A 377-amino-acid chain; its full sequence is Cytochrome b (377 aa).

Transmembrane regions (helical) follow at residues 34–54 (FGFL…FLSM), 78–100 (WLLR…IHIA), 113–133 (TWMT…LGYV), and 179–199 (FFTL…IHLL). Heme b-binding residues include His84 and His98. Heme b is bound by residues His183 and His197. His202 provides a ligand contact to a ubiquinone. A run of 4 helical transmembrane segments spans residues 225 to 245 (FTIK…ILVL), 288 to 308 (KLGG…LPLY), 323 to 343 (MLFW…AQAI), and 352 to 372 (QILT…SVLW).

It belongs to the cytochrome b family. As to quaternary structure, the main subunits of complex b-c1 are: cytochrome b, cytochrome c1 and the Rieske protein. Heme b is required as a cofactor.

The protein resides in the mitochondrion inner membrane. Its function is as follows. Component of the ubiquinol-cytochrome c reductase complex (complex III or cytochrome b-c1 complex) that is part of the mitochondrial respiratory chain. The b-c1 complex mediates electron transfer from ubiquinol to cytochrome c. Contributes to the generation of a proton gradient across the mitochondrial membrane that is then used for ATP synthesis. The sequence is that of Cytochrome b (mt:Cyt-b) from Priapulus caudatus (Priapulid worm).